A 463-amino-acid chain; its full sequence is Glutamate--tRNA ligase (463 aa).

The 'HIGH' region signature appears at proline 10–glycine 20. The short motif at lysine 252–arginine 256 is the 'KMSKS' region element. ATP is bound at residue lysine 255.

The protein belongs to the class-I aminoacyl-tRNA synthetase family. Glutamate--tRNA ligase type 1 subfamily. Monomer.

Its subcellular location is the cytoplasm. The enzyme catalyses tRNA(Glu) + L-glutamate + ATP = L-glutamyl-tRNA(Glu) + AMP + diphosphate. Catalyzes the attachment of glutamate to tRNA(Glu) in a two-step reaction: glutamate is first activated by ATP to form Glu-AMP and then transferred to the acceptor end of tRNA(Glu). This is Glutamate--tRNA ligase from Mycoplasmopsis agalactiae (strain NCTC 10123 / CIP 59.7 / PG2) (Mycoplasma agalactiae).